Here is a 302-residue protein sequence, read N- to C-terminus: Haloalkane dehalogenase (302 aa).

The 105-residue stretch at 48–152 folds into the AB hydrolase-1 domain; the sequence is PILLMHGEPS…VVVSNTGLPI (105 aa). Aspartate 123 (nucleophile) is an active-site residue. Aspartate 249 serves as the catalytic Proton donor. Histidine 278 acts as the Proton acceptor in catalysis.

This sequence belongs to the haloalkane dehalogenase family. Type 1 subfamily. Monomer.

The catalysed reaction is 1-haloalkane + H2O = a halide anion + a primary alcohol + H(+). In terms of biological role, catalyzes hydrolytic cleavage of carbon-halogen bonds in halogenated aliphatic compounds, leading to the formation of the corresponding primary alcohols, halide ions and protons. The sequence is that of Haloalkane dehalogenase from Caulobacter vibrioides (strain ATCC 19089 / CIP 103742 / CB 15) (Caulobacter crescentus).